The sequence spans 629 residues: tRNA uridine 5-carboxymethylaminomethyl modification enzyme MnmG (629 aa).

Residues 13 to 18 (GGGHAG), V125, and S180 each bind FAD. Residue 273 to 287 (GPRYCPSIEDKVMRF) participates in NAD(+) binding. Q370 provides a ligand contact to FAD.

Belongs to the MnmG family. Homodimer. Heterotetramer of two MnmE and two MnmG subunits. It depends on FAD as a cofactor.

Its subcellular location is the cytoplasm. NAD-binding protein involved in the addition of a carboxymethylaminomethyl (cmnm) group at the wobble position (U34) of certain tRNAs, forming tRNA-cmnm(5)s(2)U34. The chain is tRNA uridine 5-carboxymethylaminomethyl modification enzyme MnmG from Shigella sonnei (strain Ss046).